Reading from the N-terminus, the 857-residue chain is Bifunctional uridylyltransferase/uridylyl-removing enzyme (857 aa).

Residues 1-322 form a uridylyltransferase region; sequence MDTTPELLLC…FPSESMVTRE (322 aa). Residues 323-679 form a uridylyl-removing region; that stretch reads INDRFVERQG…ARISPAGEGL (357 aa). The HD domain maps to 441–563; it reads VDQHILMVVR…VGNGRYLTAL (123 aa). ACT domains lie at 680–760 and 788–857; these read QVAV…DPTQ and LLSV…ALAI.

Belongs to the GlnD family. Mg(2+) serves as cofactor.

The catalysed reaction is [protein-PII]-L-tyrosine + UTP = [protein-PII]-uridylyl-L-tyrosine + diphosphate. It catalyses the reaction [protein-PII]-uridylyl-L-tyrosine + H2O = [protein-PII]-L-tyrosine + UMP + H(+). Its activity is regulated as follows. Uridylyltransferase (UTase) activity is inhibited by glutamine, while glutamine activates uridylyl-removing (UR) activity. Functionally, modifies, by uridylylation and deuridylylation, the PII regulatory proteins (GlnB and homologs), in response to the nitrogen status of the cell that GlnD senses through the glutamine level. Under low glutamine levels, catalyzes the conversion of the PII proteins and UTP to PII-UMP and PPi, while under higher glutamine levels, GlnD hydrolyzes PII-UMP to PII and UMP (deuridylylation). Thus, controls uridylylation state and activity of the PII proteins, and plays an important role in the regulation of nitrogen assimilation and metabolism. The chain is Bifunctional uridylyltransferase/uridylyl-removing enzyme from Cupriavidus metallidurans (strain ATCC 43123 / DSM 2839 / NBRC 102507 / CH34) (Ralstonia metallidurans).